Here is an 89-residue protein sequence, read N- to C-terminus: Teretoxin Tan6.8 (89 aa).

An N-terminal signal peptide occupies residues 1–21; it reads MRLLLILLLLTPVILAGSLDE. Positions 22 to 42 are disordered; sequence EPNNADGANAASFTADQEGRH. Positions 22-44 are excised as a propeptide; the sequence is EPNNADGANAASFTADQEGRHKR.

Post-translationally, contains 3 disulfide bonds. Expressed by the venom duct.

It localises to the secreted. In Terebra anilis (Auger snail), this protein is Teretoxin Tan6.8.